We begin with the raw amino-acid sequence, 82 residues long: Colonization factor (82 aa).

The signal sequence occupies residues 1–33 (MFSSLKNKLNTFKSTLSLGVFLLFSAFANQALA).

The protein localises to the secreted. This Vibrio cholerae serotype O1 (strain ATCC 39315 / El Tor Inaba N16961) protein is Colonization factor (cep).